The following is a 243-amino-acid chain: 1-(5-phosphoribosyl)-5-[(5-phosphoribosylamino)methylideneamino] imidazole-4-carboxamide isomerase (243 aa).

The active-site Proton acceptor is the Asp-8. Residue Asp-129 is the Proton donor of the active site.

It belongs to the HisA/HisF family.

The protein resides in the cytoplasm. The enzyme catalyses 1-(5-phospho-beta-D-ribosyl)-5-[(5-phospho-beta-D-ribosylamino)methylideneamino]imidazole-4-carboxamide = 5-[(5-phospho-1-deoxy-D-ribulos-1-ylimino)methylamino]-1-(5-phospho-beta-D-ribosyl)imidazole-4-carboxamide. It functions in the pathway amino-acid biosynthesis; L-histidine biosynthesis; L-histidine from 5-phospho-alpha-D-ribose 1-diphosphate: step 4/9. The chain is 1-(5-phosphoribosyl)-5-[(5-phosphoribosylamino)methylideneamino] imidazole-4-carboxamide isomerase from Azorhizobium caulinodans (strain ATCC 43989 / DSM 5975 / JCM 20966 / LMG 6465 / NBRC 14845 / NCIMB 13405 / ORS 571).